The chain runs to 75 residues: Protein SlyX homolog (75 aa).

The protein belongs to the SlyX family.

The sequence is that of Protein SlyX homolog from Chromobacterium violaceum (strain ATCC 12472 / DSM 30191 / JCM 1249 / CCUG 213 / NBRC 12614 / NCIMB 9131 / NCTC 9757 / MK).